The sequence spans 248 residues: Triosephosphate isomerase (248 aa).

Substrate is bound at residue 9–11 (NWK). Catalysis depends on H94, which acts as the Electrophile. E166 functions as the Proton acceptor in the catalytic mechanism. Substrate contacts are provided by residues G172, S212, and 233–234 (GG).

It belongs to the triosephosphate isomerase family. In terms of assembly, homodimer.

The protein localises to the cytoplasm. It catalyses the reaction D-glyceraldehyde 3-phosphate = dihydroxyacetone phosphate. The protein operates within carbohydrate biosynthesis; gluconeogenesis. Its pathway is carbohydrate degradation; glycolysis; D-glyceraldehyde 3-phosphate from glycerone phosphate: step 1/1. In terms of biological role, involved in the gluconeogenesis. Catalyzes stereospecifically the conversion of dihydroxyacetone phosphate (DHAP) to D-glyceraldehyde-3-phosphate (G3P). In Clostridium botulinum (strain ATCC 19397 / Type A), this protein is Triosephosphate isomerase.